A 178-amino-acid polypeptide reads, in one-letter code: Dual-action ribosomal maturation protein DarP (178 aa).

Residues 1-14 (MTVSDHPQTVSQPD) are compositionally biased toward polar residues. Positions 1–25 (MTVSDHPQTVSQPDPESESRPSKTR) are disordered.

This sequence belongs to the DarP family.

The protein localises to the cytoplasm. Its function is as follows. Member of a network of 50S ribosomal subunit biogenesis factors which assembles along the 30S-50S interface, preventing incorrect 23S rRNA structures from forming. Promotes peptidyl transferase center (PTC) maturation. This Nitrosomonas europaea (strain ATCC 19718 / CIP 103999 / KCTC 2705 / NBRC 14298) protein is Dual-action ribosomal maturation protein DarP.